The chain runs to 787 residues: GPI ethanolamine phosphate transferase 2 (787 aa).

Residues Asn33, Asn185, and Asn397 are each glycosylated (N-linked (GlcNAc...) asparagine). A run of 3 helical transmembrane segments spans residues 400–420 (FLTYGTTLMIIGTLIVTVWNF), 426–446 (YIEHVGTSVLLGISMFASSFI), and 455–475 (WITISVLLLMQISNGKKLVVL). Asn485 is a glycosylation site (N-linked (GlcNAc...) asparagine). A run of 2 helical transmembrane segments spans residues 504–524 (HTSVLWWLNVVTFLSVGFPFL) and 536–556 (LLSVSFLALSSITYKICFAIV). N-linked (GlcNAc...) asparagine glycosylation occurs at Asn581. The chain crosses the membrane as a helical span at residues 591–611 (LVPIARIFFQICGVSIIILLF). N-linked (GlcNAc...) asparagine glycosylation is present at Asn617. Residues 629-651 (VIKFVLLLQTSSANIPLFLIFEI) traverse the membrane as a helical segment. Asn669 carries N-linked (GlcNAc...) asparagine glycosylation. 4 consecutive transmembrane segments (helical) span residues 671-693 (TFFQFGGTNSIATVNLTNAYNGV), 699-719 (IYVVGVLMFLSNYAPSIYWAL), 740-760 (GTCLMIACIALRYHLFIWSVF), and 767-787 (YAAWSLYNVVMDFAITLLGVL).

This sequence belongs to the PIGG/PIGN/PIGO family. PIGG subfamily.

The protein resides in the endoplasmic reticulum membrane. It participates in glycolipid biosynthesis; glycosylphosphatidylinositol-anchor biosynthesis. Functionally, ethanolamine phosphate transferase involved in glycosylphosphatidylinositol-anchor biosynthesis. Transfers ethanolamine phosphate to the GPI second mannose. The sequence is that of GPI ethanolamine phosphate transferase 2 (LAS21) from Kluyveromyces lactis (strain ATCC 8585 / CBS 2359 / DSM 70799 / NBRC 1267 / NRRL Y-1140 / WM37) (Yeast).